The primary structure comprises 117 residues: MITLFLILCYFILIFNIIVPAISEKMRRERAAYVNYKRLNKNFICVDDRLFSYNFTTSGIKAKVAVDNKNVPIPCSKINEVNNNKDVDTLYCDKDRDDIPGFARSCYRAYSDLFFTT.

A helical; Signal-anchor for type III membrane protein membrane pass occupies residues 1 to 21 (MITLFLILCYFILIFNIIVPA). Over 22–117 (ISEKMRRERA…RAYSDLFFTT (96 aa)) the chain is Virion surface.

This sequence belongs to the chordopoxvirinae A21 family. As to quaternary structure, envelope protein part of a stable entry-fusion complex (EFC) which is at least composed of proteins A16, A21, A28, G3, G9, H2, J5, and L5. Formation of the viral membrane is necessary for the assembly of the complex. In terms of processing, contains two intramolecular disulfide bonds. They are created by the viral disulfide bond formation pathway, a poxvirus-specific pathway that operates on the cytoplasmic side of the MV membranes.

The protein resides in the virion membrane. Envelope protein part of the entry-fusion complex responsible for the virus membrane fusion with host cell membrane during virus entry. The polypeptide is Virion membrane protein A21 (Vaccinia virus (strain Ankara) (VACV)).